An 86-amino-acid chain; its full sequence is Small ribosomal subunit protein bS16 (86 aa).

The protein belongs to the bacterial ribosomal protein bS16 family.

The chain is Small ribosomal subunit protein bS16 from Trichormus variabilis (strain ATCC 29413 / PCC 7937) (Anabaena variabilis).